A 185-amino-acid chain; its full sequence is Ribosome-recycling factor (185 aa).

Belongs to the RRF family.

Its subcellular location is the cytoplasm. Its function is as follows. Responsible for the release of ribosomes from messenger RNA at the termination of protein biosynthesis. May increase the efficiency of translation by recycling ribosomes from one round of translation to another. The polypeptide is Ribosome-recycling factor (Erwinia tasmaniensis (strain DSM 17950 / CFBP 7177 / CIP 109463 / NCPPB 4357 / Et1/99)).